We begin with the raw amino-acid sequence, 57 residues long: Large ribosomal subunit protein bL32 (57 aa).

A compositionally biased stretch (basic residues) spans 1 to 22 (MAVPKKKTSKAKRDQRRAHWRR). The interval 1–35 (MAVPKKKTSKAKRDQRRAHWRRQASSQAQKALSLG) is disordered.

This sequence belongs to the bacterial ribosomal protein bL32 family.

The protein is Large ribosomal subunit protein bL32 (rpmF) of Synechocystis sp. (strain ATCC 27184 / PCC 6803 / Kazusa).